The chain runs to 1125 residues: ATP-dependent DNA helicase Hel308 (1125 aa).

The Q motif motif lies at 1–29 (MKVDELPIDERIKRVIKERGIEELYPPQA). Residues Gln28 and 46–53 (IPTASGKT) each bind ATP. The Helicase ATP-binding domain maps to 33–197 (KSGVLEGKNL…WLDASLVVSD (165 aa)). A DEAH box motif is present at residues 145–148 (DEVH). Residues 226–440 (NWESLVLDAV…ELKERLESET (215 aa)) enclose the Helicase C-terminal domain. The region spanning 500 to 640 (LIGLWIAEGS…LQLLVASLGY (141 aa)) is the DOD-type homing endonuclease domain.

Belongs to the helicase family. Hel308 subfamily. As to quaternary structure, monomer. In terms of processing, this protein undergoes a protein self splicing that involves a post-translational excision of the intervening region (intein) followed by peptide ligation.

It carries out the reaction Couples ATP hydrolysis with the unwinding of duplex DNA by translocating in the 3'-5' direction.. It catalyses the reaction ATP + H2O = ADP + phosphate + H(+). Functionally, DNA-dependent ATPase and 3'-5' DNA helicase that may be involved in repair of stalled replication forks. The protein is ATP-dependent DNA helicase Hel308 of Thermococcus kodakarensis (strain ATCC BAA-918 / JCM 12380 / KOD1) (Pyrococcus kodakaraensis (strain KOD1)).